A 173-amino-acid chain; its full sequence is Glycine cleavage system H protein, mitochondrial (173 aa).

A mitochondrion-targeting transit peptide spans 1 to 48; that stretch reads MALRVVRSVRALLCTLRAVPSPAAPCPPRPWQLGVGAVRTLRTGPALL. Residues 66-148 form the Lipoyl-binding domain; that stretch reads IGTVGISNFA…YEDGWLIKMT (83 aa). Lysine 107 bears the N6-lipoyllysine mark.

The protein belongs to the GcvH family. As to quaternary structure, interacts with GLDC. The glycine cleavage system is composed of four proteins: P (GLDC), T (GCST), L (DLD) and H (GCSH). Requires (R)-lipoate as cofactor.

Its subcellular location is the mitochondrion. Functionally, the glycine cleavage system catalyzes the degradation of glycine. The H protein (GCSH) shuttles the methylamine group of glycine from the P protein (GLDC) to the T protein (GCST). Has a pivotal role in the lipoylation of enzymes involved in cellular energetics such as the mitochondrial dihydrolipoyllysine-residue acetyltransferase component of pyruvate dehydrogenase complex (DLAT), and the mitochondrial dihydrolipoyllysine-residue succinyltransferase component of 2-oxoglutarate dehydrogenase complex (DLST). The sequence is that of Glycine cleavage system H protein, mitochondrial from Homo sapiens (Human).